The following is a 591-amino-acid chain: Parathyroid hormone/parathyroid hormone-related peptide receptor (591 aa).

Positions Met1–Val26 are cleaved as a signal peptide. The Extracellular portion of the chain corresponds to Asp27–Gly188. Cystine bridges form between Cys48–Cys117, Cys108–Cys148, and Cys131–Cys170. Residues Lys67–Arg104 form a disordered region. Positions Glu81–Asp96 are enriched in basic and acidic residues. N-linked (GlcNAc...) asparagine glycosylation is found at Asn151, Asn161, Asn166, and Asn176. A helical transmembrane segment spans residues Met189–Phe212. Over Arg213 to Arg219 the chain is Cytoplasmic. Residues Asn220–Val239 form a helical membrane-spanning segment. The Extracellular portion of the chain corresponds to Lys240–Arg282. Residues Val283–Leu306 form a helical membrane-spanning segment. Residues His307 to Tyr320 lie on the Cytoplasmic side of the membrane. A helical transmembrane segment spans residues Leu321–Val342. Residues Arg343–Trp361 lie on the Extracellular side of the membrane. The helical transmembrane segment at Ile362–Ile382 threads the bilayer. Residues Arg383–Ser409 lie on the Cytoplasmic side of the membrane. The helical transmembrane segment at Thr410–Pro428 threads the bilayer. Residues Tyr429–Gln440 lie on the Extracellular side of the membrane. The helical transmembrane segment at Met441 to Asn463 threads the bilayer. Over Gly464 to Met591 the chain is Cytoplasmic. The short motif at Trp474–Trp477 is the Important for interaction with G proteins element.

This sequence belongs to the G-protein coupled receptor 2 family. Homodimer in the absence of bound ligand. Peptide hormone binding leads to dissociation of the homodimer. N-glycosylated. Detected in kidney.

It is found in the cell membrane. In terms of biological role, G-protein-coupled receptor for parathyroid hormone (PTH) and for parathyroid hormone-related peptide (PTHLH). Ligand binding causes a conformation change that triggers signaling via guanine nucleotide-binding proteins (G proteins) and modulates the activity of downstream effectors, such as adenylate cyclase (cAMP). PTH1R is coupled to G(s) G alpha proteins and mediates activation of adenylate cyclase activity. PTHLH dissociates from PTH1R more rapidly than PTH; as consequence, the cAMP response induced by PTHLH decays faster than the response induced by PTH. This is Parathyroid hormone/parathyroid hormone-related peptide receptor (Pth1r) from Mus musculus (Mouse).